We begin with the raw amino-acid sequence, 290 residues long: Homeobox protein HMX3-B (290 aa).

2 disordered regions span residues 1 to 41 and 96 to 169; these read MADS…GSSK and EKVN…KKKT. A compositionally biased stretch (basic and acidic residues) spans 107-124; the sequence is LDRHTPDPPKSDQESKEE. Positions 125-137 are enriched in acidic residues; the sequence is SADDEIALEESDA. The span at 138–162 shows a compositional bias: basic and acidic residues; that stretch reads EEPKKETDQEDDWMRKGEDLESDKK. A DNA-binding region (homeobox) is located at residues 166–225; sequence KKKTRTVFSRSQVFQLESTFDIKRYLSSSERAGLAASLHLTETQVKIWFQNRRNKWKRQL.

It belongs to the HMX homeobox family. In terms of tissue distribution, expressed in the ear placode and vesicle and in cells forming the vestibulo-acoustic ganglion.

The protein resides in the nucleus. Functionally, transcription factor involved in specification of neuronal cell types and which is required for inner ear and hypothalamus development. Binds to the 5'-CAAGTG-3' core sequence. In Oryzias latipes (Japanese rice fish), this protein is Homeobox protein HMX3-B (hmx3b).